A 364-amino-acid chain; its full sequence is MRSLCVDLGQRSYPIHTGTGILADSALFAPALSKGPVAVVTDSNVAPLYLETLQKTLKALDKPSLSIILPAGEESKSLDNIQEIAGRLLSAGYGRDCTLCALGGGVVGDITGFAAAVYQRGVAYIQVPTTLLAMVDSSVGGKTGVNHPLGKNMIGAFYQPQAVIADTDTLDSLPEREFRSGLAEVIKYGLINDQGFFSWLEDHMDAVLAREPDALTKVIRHSCKDKADIVARDELEGGLRAILNLGHTFGHAIEAATGYGQYLHGEAVAIGMVMAADLSRRLDLIRESEQDRIYALVEATGLPTLAPALPVADYLGFMRVDKKAEGGRVRFILLRGIGSAVITGEVPPAAITQTLQAFMEHGHA.

Residues 105 to 109 (GVVGD), 129 to 130 (TT), Lys142, and Lys151 contribute to the NAD(+) site. Zn(2+) is bound by residues Glu184, His247, and His264.

This sequence belongs to the sugar phosphate cyclases superfamily. Dehydroquinate synthase family. Co(2+) is required as a cofactor. It depends on Zn(2+) as a cofactor. Requires NAD(+) as cofactor.

It localises to the cytoplasm. It carries out the reaction 7-phospho-2-dehydro-3-deoxy-D-arabino-heptonate = 3-dehydroquinate + phosphate. It functions in the pathway metabolic intermediate biosynthesis; chorismate biosynthesis; chorismate from D-erythrose 4-phosphate and phosphoenolpyruvate: step 2/7. In terms of biological role, catalyzes the conversion of 3-deoxy-D-arabino-heptulosonate 7-phosphate (DAHP) to dehydroquinate (DHQ). In Acidithiobacillus ferrooxidans (strain ATCC 23270 / DSM 14882 / CIP 104768 / NCIMB 8455) (Ferrobacillus ferrooxidans (strain ATCC 23270)), this protein is 3-dehydroquinate synthase.